Consider the following 197-residue polypeptide: Phospholipid hydroperoxide glutathione peroxidase (197 aa).

A Phosphoserine modification is found at Ser40. Sec73 is a catalytic residue. Position 73 (Sec73) is a non-standard amino acid, selenocysteine.

Belongs to the glutathione peroxidase family. In terms of assembly, monomer. Has a tendency to form higher mass oligomers. Interacts with FUNDC1; this interaction promotes GPX4 recruitment into mitochondria through TOM/TIM complex where it is degraded by mitophagy.

The protein localises to the mitochondrion. The protein resides in the cytoplasm. It carries out the reaction a hydroperoxy polyunsaturated fatty acid + 2 glutathione = a hydroxy polyunsaturated fatty acid + glutathione disulfide + H2O. It catalyses the reaction 2 glutathione + H2O2 = glutathione disulfide + 2 H2O. The catalysed reaction is tert-butyl hydroperoxide + 2 glutathione = tert-butanol + glutathione disulfide + H2O. The enzyme catalyses cumene hydroperoxide + 2 glutathione = 2-phenylpropan-2-ol + glutathione disulfide + H2O. It carries out the reaction (9S)-hydroperoxy-(10E,12Z)-octadecadienoate + 2 glutathione = (9S)-hydroxy-(10E,12Z)-octadecadienoate + glutathione disulfide + H2O. It catalyses the reaction (13S)-hydroperoxy-(9Z,11E)-octadecadienoate + 2 glutathione = (13S)-hydroxy-(9Z,11E)-octadecadienoate + glutathione disulfide + H2O. The catalysed reaction is (5S)-hydroperoxy-(6E,8Z,11Z,14Z)-eicosatetraenoate + 2 glutathione = (5S)-hydroxy-(6E,8Z,11Z,14Z)-eicosatetraenoate + glutathione disulfide + H2O. The enzyme catalyses (12R)-hydroperoxy-(5Z,8Z,10E,14Z)-eicosatetraenoate + 2 glutathione = (12R)-hydroxy-(5Z,8Z,10E,14Z)-eicosatetraenoate + glutathione disulfide + H2O. It carries out the reaction (12S)-hydroperoxy-(5Z,8Z,10E,14Z)-eicosatetraenoate + 2 glutathione = (12S)-hydroxy-(5Z,8Z,10E,14Z)-eicosatetraenoate + glutathione disulfide + H2O. It catalyses the reaction (15S)-hydroperoxy-(5Z,8Z,11Z,13E)-eicosatetraenoate + 2 glutathione = (15S)-hydroxy-(5Z,8Z,11Z,13E)-eicosatetraenoate + glutathione disulfide + H2O. The catalysed reaction is (5S)-hydroperoxy-(6E,8Z,11Z,14Z,17Z)-eicosapentaenoate + 2 glutathione = (5S)-hydroxy-(6E,8Z,11Z,14Z,17Z)-eicosapentaenoate + glutathione disulfide + H2O. The enzyme catalyses (12S)-hydroperoxy-(5Z,8Z,10E,14Z,17Z)-eicosapentaenoate + 2 glutathione = (12S)-hydroxy-(5Z,8Z,10E,14Z,17Z)-eicosapentaenoate + glutathione disulfide + H2O. It carries out the reaction (15S)-hydroperoxy-(5Z,8Z,11Z,13E,17Z)-eicosapentaenoate + 2 glutathione = (15S)-hydroxy-(5Z,8Z,11Z,13E,17Z)-eicosapentaenoate + glutathione disulfide + H2O. It catalyses the reaction (15S)-hydroperoxy-(11Z,13E)-eicosadienoate + 2 glutathione = (15S)-hydroxy-(11Z,13E)-eicosadienoate + glutathione disulfide + H2O. The catalysed reaction is (17S)-hydroperoxy-(4Z,7Z,10Z,13Z,15E,19Z)-docosahexaenoate + 2 glutathione = (17S)-hydroxy-(4Z,7Z,10Z,13Z,15E,19Z)-docosahexaenoate + glutathione disulfide + H2O. The enzyme catalyses a hydroperoxy-1,2-diacyl-glycero-3-phosphocholine + 2 glutathione = a hydroxy-1,2-diacyl-glycero-3-phosphocholine + glutathione disulfide + H2O. Essential antioxidant peroxidase that directly reduces phospholipid hydroperoxide even if they are incorporated in membranes and lipoproteins. Can also reduce fatty acid hydroperoxide, cholesterol hydroperoxide and thymine hydroperoxide. Plays a key role in protecting cells from oxidative damage by preventing membrane lipid peroxidation. Required to prevent cells from ferroptosis, a non-apoptotic cell death resulting from an iron-dependent accumulation of lipid reactive oxygen species. The presence of selenocysteine (Sec) versus Cys at the active site is essential for life: it provides resistance to overoxidation and prevents cells against ferroptosis. The presence of Sec at the active site is also essential for the survival of a specific type of parvalbumin-positive interneurons, thereby preventing against fatal epileptic seizures. May be required to protect cells from the toxicity of ingested lipid hydroperoxides. Required for normal sperm development and male fertility. Essential for maturation and survival of photoreceptor cells. Plays a role in a primary T-cell response to viral and parasitic infection by protecting T-cells from ferroptosis and by supporting T-cell expansion. Plays a role of glutathione peroxidase in platelets in the arachidonic acid metabolism. Reduces hydroperoxy ester lipids formed by a 15-lipoxygenase that may play a role as down-regulator of the cellular 15-lipoxygenase pathway. Can also reduce small soluble hydroperoxides such as H2O2, cumene hydroperoxide and tert-butyl hydroperoxide. This chain is Phospholipid hydroperoxide glutathione peroxidase, found in Bos taurus (Bovine).